Here is a 417-residue protein sequence, read N- to C-terminus: Serine hydroxymethyltransferase (417 aa).

(6S)-5,6,7,8-tetrahydrofolate contacts are provided by residues leucine 121 and 125–127; that span reads GHL. Lysine 229 is subject to N6-(pyridoxal phosphate)lysine. Position 355 to 357 (355 to 357) interacts with (6S)-5,6,7,8-tetrahydrofolate; the sequence is SPF.

This sequence belongs to the SHMT family. In terms of assembly, homodimer. Pyridoxal 5'-phosphate is required as a cofactor.

It is found in the cytoplasm. The catalysed reaction is (6R)-5,10-methylene-5,6,7,8-tetrahydrofolate + glycine + H2O = (6S)-5,6,7,8-tetrahydrofolate + L-serine. Its pathway is one-carbon metabolism; tetrahydrofolate interconversion. It participates in amino-acid biosynthesis; glycine biosynthesis; glycine from L-serine: step 1/1. Its function is as follows. Catalyzes the reversible interconversion of serine and glycine with tetrahydrofolate (THF) serving as the one-carbon carrier. This reaction serves as the major source of one-carbon groups required for the biosynthesis of purines, thymidylate, methionine, and other important biomolecules. Also exhibits THF-independent aldolase activity toward beta-hydroxyamino acids, producing glycine and aldehydes, via a retro-aldol mechanism. The chain is Serine hydroxymethyltransferase from Serratia proteamaculans (strain 568).